A 952-amino-acid polypeptide reads, in one-letter code: MKYNKLLFSLLLLAVFCFSCKEEQKLQTSLDFDKVLLNAKSNPIAIESESPLFSWIIKAEGFGKSQSAYHILVASSLDKLDETHADVWNSNKVESSKSTFVKYEGKELKAATRYYWKVKVWDKSNQESNWSEPQYFQMGLLDESNWGEAKWITLTNDTRTSEYRFREYKTGRMEQPIQVDGFAASYFRNKINLNKEVDNAQVYICGLGYYEFFLNGEKVGDHVLDPAPSNYDKQAYYVNYDITEQLNSGENALGIILGNGFYGQNISWKNDPESDRDLAYGPPTVRVLLKLKYKDGTESEFFSDETWKESTGPIVFNNIYGGDTYDARFELGDWTSTNYDDSSWGFAKETAPEIKNISAQQIPAIKKLQDYEPQNVFKGSDGEWIVDFGQNIAGWVKLNVSEKEGQLIEVITTEALLTNGRDIFPGSTGGGANGMAQIYQYICKGDGQESWEPKFSYHGFRYAKIKGVSTKPDADMIKAVLVATDIQETGSFECSDDLFNKMHNISKWTIVDNVHGIPEDCPHREKCGWLGDAHAFCEYALYNYDMYDFYKKYMEDIRTQMLPTKGHNNPELKFQVPTMIAPGKRTSSYAKIDWGVATMYLPWYNYLYYGDDAIVNEYYPEMKDLTNFYLNFKGENGIMQDGMGDWCPPRWDRRTNPEAMECDPIISANAYFYDVLGIMETFAKMNNDGAFQSEMKAEKEALKDAFNKAFLVEIPNTDFKWYQSQTATVQALQFGMVPEEEIENVVNGLEYDIVEVKGGHHSTGIHGNRYIYTVLSKYGKADLAYRILTTPDFPSQTYIMNSGFTTWPERQFEWETMEGPTNSLNHPMHSGFSAYFFESLGGIKSSTKEAGYKQFIVNPEFPSQITQTKVSVPTPYGDIKNDWSFEEGKLSMTLEIPFNTEANLVLNQAELESLIINGKTFQNLQKNTKSVTLQGSNVILGSGKYKILYNKR.

The N-terminal stretch at 1–21 (MKYNKLLFSLLLLAVFCFSCK) is a signal peptide. Alpha-L-rhamnose is bound by residues aspartate 520, 524 to 525 (RE), aspartate 532, and tryptophan 594. Glutamate 525 functions as the Proton donor in the catalytic mechanism. The Proton acceptor role is filled by glutamate 809. Histidine 826 serves as a coordination point for alpha-L-rhamnose.

It belongs to the glycosyl hydrolase 78 family.

Its subcellular location is the cell membrane. The catalysed reaction is Hydrolysis of terminal non-reducing alpha-L-rhamnose residues in alpha-L-rhamnosides.. Its function is as follows. Alpha-L-rhamnosidase that may be involved in ulvan degradation. Ulvan is the main polysaccharide component of the Ulvales (green seaweed) cell wall. It is composed of disaccharide building blocks comprising 3-sulfated rhamnose (Rha3S) linked to D-glucuronic acid (GlcA), L-iduronic acid (IduA), or D-xylose (Xyl). This is Alpha-L-rhamnosidase from Formosa agariphila (strain DSM 15362 / KCTC 12365 / LMG 23005 / KMM 3901 / M-2Alg 35-1).